The sequence spans 572 residues: Proline--tRNA ligase (572 aa).

Belongs to the class-II aminoacyl-tRNA synthetase family. ProS type 1 subfamily. As to quaternary structure, homodimer.

The protein resides in the cytoplasm. It catalyses the reaction tRNA(Pro) + L-proline + ATP = L-prolyl-tRNA(Pro) + AMP + diphosphate. Catalyzes the attachment of proline to tRNA(Pro) in a two-step reaction: proline is first activated by ATP to form Pro-AMP and then transferred to the acceptor end of tRNA(Pro). As ProRS can inadvertently accommodate and process non-cognate amino acids such as alanine and cysteine, to avoid such errors it has two additional distinct editing activities against alanine. One activity is designated as 'pretransfer' editing and involves the tRNA(Pro)-independent hydrolysis of activated Ala-AMP. The other activity is designated 'posttransfer' editing and involves deacylation of mischarged Ala-tRNA(Pro). The misacylated Cys-tRNA(Pro) is not edited by ProRS. The protein is Proline--tRNA ligase of Escherichia coli O7:K1 (strain IAI39 / ExPEC).